Reading from the N-terminus, the 1488-residue chain is Indigoidine synthase (1488 aa).

The adenylation stretch occupies residues Lys-229 to Leu-585. The region spanning Ala-1137–Arg-1212 is the Carrier domain. At Ser-1172 the chain carries O-(pantetheine 4'-phosphoryl)serine. The tract at residues Pro-1230–Ala-1346 is thioesterase.

This sequence belongs to the ATP-dependent AMP-binding enzyme family. The cofactor is pantetheine 4'-phosphate.

It catalyses the reaction 2 FMN + 2 L-glutamine + 2 ATP + O2 = indigoidine + 2 FMNH2 + 2 AMP + 2 diphosphate + 2 H2O. The catalysed reaction is FMN + L-glutamine + ATP = 3-amino-1,5-dihydropyridine-2,6-dione + FMNH2 + AMP + diphosphate. It carries out the reaction 2 3-amino-1,5-dihydropyridine-2,6-dione + O2 = indigoidine + 2 H2O. It participates in pigment biosynthesis. Functionally, nonribosomal peptide synthetase involved in the biosynthesis of the blue pigment indigoidine, which is implicated in pathogenicity and protection from oxidative stress. Catalyzes the synthesis of the blue pigment using L-Gln as a substrate. Two glutamine molecules are cyclized and oxidized to form indigoidine. The protein is Indigoidine synthase of Dickeya dadantii (strain 3937) (Erwinia chrysanthemi (strain 3937)).